The following is a 297-amino-acid chain: MAFPKMRLMYVCLLVLGALCVYFSMYSLNLFKEQSFVYKKDGNFLKLPDTDCRQTPPFLVLLVTSSHRQLAERMAIRQTWGKERTVKGKQLKTFFLLGTTSSAAETKEVDQESQRHGDIIQKDFLDVYYNLTLKTMMGIEWVHRFCPQAAFVMKTDSDMFINVDYLTELLLKKNRTTRFFTGFLKLNEFPIRQPFSKWFVSKSEYPWDRYPPFCSGTGYVFSGDVASQVYNVSESVPYIKLEDVFVGLCLERLNIRLEELHSQPTFFPGGLRFSVCRFRRIVACHFIKPRTLLDYWQ.

Topologically, residues Met-1–Arg-7 are cytoplasmic. The chain crosses the membrane as a helical; Signal-anchor for type II membrane protein span at residues Leu-8–Leu-28. Topologically, residues Asn-29–Gln-297 are lumenal. 3 N-linked (GlcNAc...) asparagine glycosylation sites follow: Asn-130, Asn-174, and Asn-231.

The protein belongs to the glycosyltransferase 31 family.

It is found in the golgi apparatus membrane. It carries out the reaction a globoside Gb4Cer (d18:1(4E)) + UDP-alpha-D-galactose = a globoside GalGb4Cer (d18:1(4E)) + UDP + H(+). It functions in the pathway protein modification; protein glycosylation. In terms of biological role, catalyzes the transfer of Gal to GlcNAc-based acceptors with a preference for the core3 O-linked glycan GlcNAc(beta1,3)GalNAc structure. Can use glycolipid LC3Cer as an efficient acceptor. In Pan troglodytes (Chimpanzee), this protein is Beta-1,3-galactosyltransferase 5 (B3GALT5).